The sequence spans 360 residues: Cysteine proteinase 2 (360 aa).

A signal peptide spans 1–19 (MVPRRLFVLAVVVLADTAA). The propeptide at 20-142 (VVNSGFADSN…NHRMRAAAVA (123 aa)) is activation peptide. N-linked (GlcNAc...) asparagine glycosylation occurs at Asn-125. Cystine bridges form between Cys-164/Cys-207 and Cys-198/Cys-240. The active site involves Cys-167. An N-linked (GlcNAc...) asparagine glycan is attached at Asn-256. A disulfide bond links Cys-298 and Cys-348. Residues His-307 and Asn-327 contribute to the active site.

Belongs to the peptidase C1 family. In terms of tissue distribution, expressed at the onset of germination.

The protein resides in the vacuole. Functionally, involved in the degradation of the storage protein zein. May play a role in proteolysis during emergencies. The polypeptide is Cysteine proteinase 2 (CCP2) (Zea mays (Maize)).